Consider the following 367-residue polypeptide: Quinolinate synthase (367 aa).

Residues histidine 46 and serine 63 each coordinate iminosuccinate. Cysteine 110 is a binding site for [4Fe-4S] cluster. Iminosuccinate-binding positions include 141-143 (YVN) and serine 162. A [4Fe-4S] cluster-binding site is contributed by cysteine 229. Iminosuccinate is bound by residues 255-257 (HPE) and threonine 272. Cysteine 319 lines the [4Fe-4S] cluster pocket.

This sequence belongs to the quinolinate synthase family. Type 3 subfamily. The cofactor is [4Fe-4S] cluster.

The protein resides in the cytoplasm. It carries out the reaction iminosuccinate + dihydroxyacetone phosphate = quinolinate + phosphate + 2 H2O + H(+). The protein operates within cofactor biosynthesis; NAD(+) biosynthesis; quinolinate from iminoaspartate: step 1/1. In terms of biological role, catalyzes the condensation of iminoaspartate with dihydroxyacetone phosphate to form quinolinate. This chain is Quinolinate synthase, found in Bacillus velezensis (strain DSM 23117 / BGSC 10A6 / LMG 26770 / FZB42) (Bacillus amyloliquefaciens subsp. plantarum).